The following is a 372-amino-acid chain: uncharacterized protein (372 aa).

Positions 328 to 353 (KKGQPCKDEDAVTVPLPSSDPGKETQ) are disordered.

In terms of biological role, induces the SOS system when expressed in E.coli, therefore, it may play a role in DNA metabolism and/or in genome stability. This is an uncharacterized protein from Saccharomyces cerevisiae (strain ATCC 204508 / S288c) (Baker's yeast).